Consider the following 458-residue polypeptide: Putative long chain fatty acid-CoA ligase VraA (458 aa).

The protein belongs to the ATP-dependent AMP-binding enzyme family.

The chain is Putative long chain fatty acid-CoA ligase VraA (vraA) from Staphylococcus aureus (strain Mu3 / ATCC 700698).